The following is a 289-amino-acid chain: Homoserine kinase (289 aa).

79 to 89 is an ATP binding site; sequence PLARGLGSSSS.

This sequence belongs to the GHMP kinase family. Homoserine kinase subfamily.

It is found in the cytoplasm. The catalysed reaction is L-homoserine + ATP = O-phospho-L-homoserine + ADP + H(+). Its pathway is amino-acid biosynthesis; L-threonine biosynthesis; L-threonine from L-aspartate: step 4/5. In terms of biological role, catalyzes the ATP-dependent phosphorylation of L-homoserine to L-homoserine phosphate. In Streptococcus pneumoniae (strain Taiwan19F-14), this protein is Homoserine kinase.